A 440-amino-acid chain; its full sequence is tRNA-2-methylthio-N(6)-dimethylallyladenosine synthase (440 aa).

The MTTase N-terminal domain maps to 3 to 119; sequence KKFFIKTFGC…LPELINQAQA (117 aa). 6 residues coordinate [4Fe-4S] cluster: C12, C48, C82, C158, C162, and C165. The Radical SAM core domain occupies 144–374; that stretch reads RDNKYCAYVT…LELQKSILSE (231 aa). In terms of domain architecture, TRAM spans 377–437; sequence KKYEGTVQEV…PFSLEGELLE (61 aa).

Belongs to the methylthiotransferase family. MiaB subfamily. As to quaternary structure, monomer. The cofactor is [4Fe-4S] cluster.

The protein resides in the cytoplasm. The catalysed reaction is N(6)-dimethylallyladenosine(37) in tRNA + (sulfur carrier)-SH + AH2 + 2 S-adenosyl-L-methionine = 2-methylsulfanyl-N(6)-dimethylallyladenosine(37) in tRNA + (sulfur carrier)-H + 5'-deoxyadenosine + L-methionine + A + S-adenosyl-L-homocysteine + 2 H(+). In terms of biological role, catalyzes the methylthiolation of N6-(dimethylallyl)adenosine (i(6)A), leading to the formation of 2-methylthio-N6-(dimethylallyl)adenosine (ms(2)i(6)A) at position 37 in tRNAs that read codons beginning with uridine. This Aquifex aeolicus (strain VF5) protein is tRNA-2-methylthio-N(6)-dimethylallyladenosine synthase.